The sequence spans 492 residues: Octanoyltransferase (492 aa).

The unknown stretch occupies residues 1–255; sequence MRCILLGSGT…GYDGLEAIID (255 aa). Residues 256-492 are lipB domain; the sequence is EKGIRIKDFE…AVFRRNFGAL (237 aa). The BPL/LPL catalytic domain occupies 305–492; the sequence is RKPQNTLLFC…AVFRRNFGAL (188 aa). Residues 350–357, 423–425, and 436–438 each bind substrate; these read RGGDITYH, AIG, and GFA. Cys454 functions as the Acyl-thioester intermediate in the catalytic mechanism.

It in the C-terminal section; belongs to the LipB family.

It localises to the cytoplasm. It catalyses the reaction octanoyl-[ACP] + L-lysyl-[protein] = N(6)-octanoyl-L-lysyl-[protein] + holo-[ACP] + H(+). Its pathway is protein modification; protein lipoylation via endogenous pathway; protein N(6)-(lipoyl)lysine from octanoyl-[acyl-carrier-protein]: step 1/2. Functionally, catalyzes the transfer of endogenously produced octanoic acid from octanoyl-acyl-carrier-protein onto the lipoyl domains of lipoate-dependent enzymes. Lipoyl-ACP can also act as a substrate although octanoyl-ACP is likely to be the physiological substrate. This Porphyromonas gingivalis (strain ATCC BAA-308 / W83) protein is Octanoyltransferase.